The sequence spans 284 residues: Ribosomal RNA small subunit methyltransferase A (284 aa).

Residues Asn-28, Leu-30, Gly-55, Glu-77, Asp-103, and Asn-123 each coordinate S-adenosyl-L-methionine.

This sequence belongs to the class I-like SAM-binding methyltransferase superfamily. rRNA adenine N(6)-methyltransferase family. RsmA subfamily.

It is found in the cytoplasm. It carries out the reaction adenosine(1518)/adenosine(1519) in 16S rRNA + 4 S-adenosyl-L-methionine = N(6)-dimethyladenosine(1518)/N(6)-dimethyladenosine(1519) in 16S rRNA + 4 S-adenosyl-L-homocysteine + 4 H(+). Its function is as follows. Specifically dimethylates two adjacent adenosines (A1518 and A1519) in the loop of a conserved hairpin near the 3'-end of 16S rRNA in the 30S particle. May play a critical role in biogenesis of 30S subunits. In Bradyrhizobium diazoefficiens (strain JCM 10833 / BCRC 13528 / IAM 13628 / NBRC 14792 / USDA 110), this protein is Ribosomal RNA small subunit methyltransferase A.